A 102-amino-acid chain; its full sequence is Spexin prohormone 1 (102 aa).

Positions 1-26 (MKDLRTLAAYALALLLLATFVSHSWS) are cleaved as a signal peptide. Positions 27–35 (APKGSFQRR) are excised as a propeptide. Glutamine amide is present on Q49. Positions 50–102 (GRRFVSEDRNEGDLYDTIRLESRSQNTENLSISKAAAFLLNILQQARDEDEPY) are excised as a propeptide.

Belongs to the spexin family. In terms of tissue distribution, mainly expressed in the brain and ovary. Detected bilaterally in the adult brainstem. Expressed in neurons in the dorsal habenula (dHb). In the dHb some neurons project into the interpeduncular nucleus (IPN) where expression often overlaps with galr2a and galr2b. Weakly expressed in the liver, intestine, kidney, heart and gill.

Its subcellular location is the secreted. The protein resides in the extracellular space. It localises to the cytoplasmic vesicle. The protein localises to the secretory vesicle. Plays a role in the regulation of food intake and energy metabolism. May also be involved in suppressing the anxiety response by promoting the expression of serotonin-related genes such as fev, tph2 and slc6a4a. In terms of biological role, acts as a ligand for galanin receptors galr2a and galr2b. Brain administration of the peptide inhibits food consumption and elevates levels of glucose, triacylglycerol and cholesterol in the serum. Likely to control food intake by regulating appetite related genes which includes the negative regulation of the orexigenic factor agrp. By controlling food intake it may act as a satiety factor in energy metabolism. The polypeptide is Spexin prohormone 1 (spx) (Danio rerio (Zebrafish)).